Reading from the N-terminus, the 507-residue chain is Cobyric acid synthase (507 aa).

The GATase cobBQ-type domain maps to 273–468; that stretch reads RPVIAVIAYP…LHGMFEDPAV (196 aa). Catalysis depends on Cys354, which acts as the Nucleophile. Residue His460 is part of the active site.

Belongs to the CobB/CobQ family. CobQ subfamily.

It functions in the pathway cofactor biosynthesis; adenosylcobalamin biosynthesis. Functionally, catalyzes amidations at positions B, D, E, and G on adenosylcobyrinic A,C-diamide. NH(2) groups are provided by glutamine, and one molecule of ATP is hydrogenolyzed for each amidation. The sequence is that of Cobyric acid synthase from Polaromonas sp. (strain JS666 / ATCC BAA-500).